The sequence spans 368 residues: NAD(P)H-quinone oxidoreductase subunit 1, chloroplastic (368 aa).

6 consecutive transmembrane segments (helical) span residues 27-47 (FIWI…GVLV), 97-117 (WLFN…YLVI), 130-150 (IGVF…LMAG), 269-289 (SSLF…PFLL), 308-328 (IIIG…IAIM), and 348-368 (FLLP…AFLL).

This sequence belongs to the complex I subunit 1 family. NDH is composed of at least 16 different subunits, 5 of which are encoded in the nucleus.

The protein resides in the plastid. The protein localises to the chloroplast thylakoid membrane. It carries out the reaction a plastoquinone + NADH + (n+1) H(+)(in) = a plastoquinol + NAD(+) + n H(+)(out). The enzyme catalyses a plastoquinone + NADPH + (n+1) H(+)(in) = a plastoquinol + NADP(+) + n H(+)(out). Its function is as follows. NDH shuttles electrons from NAD(P)H:plastoquinone, via FMN and iron-sulfur (Fe-S) centers, to quinones in the photosynthetic chain and possibly in a chloroplast respiratory chain. The immediate electron acceptor for the enzyme in this species is believed to be plastoquinone. Couples the redox reaction to proton translocation, and thus conserves the redox energy in a proton gradient. This Physcomitrium patens (Spreading-leaved earth moss) protein is NAD(P)H-quinone oxidoreductase subunit 1, chloroplastic.